The chain runs to 275 residues: Envelope glycoprotein (275 aa).

3 disulfides stabilise this stretch: C1-C10, C18-C27, and C58-C62. N122 carries an N-linked (GlcNAc...) asparagine; by host glycan. 4 cysteine pairs are disulfide-bonded: C164-C194, C187-C239, C204-C209, and C240-C245.

This sequence belongs to the hantavirus envelope glycoprotein family. As to quaternary structure, homodimer. Homotetramer; forms heterotetrameric Gn-Gc spikes in the pre-fusion conformation. Homotrimer; forms homotrimer in the post-fusion conformation at acidic pH. Interacts (via C-terminus) with the nucleoprotein. Envelope polyprotein precursor is quickly cleaved in vivo just after synthesis, presumably by host signal peptidase.

The protein resides in the virion membrane. It localises to the host cell surface. The protein localises to the host Golgi apparatus membrane. It is found in the host endoplasmic reticulum membrane. Functionally, forms homotetramers with glycoprotein N at the surface of the virion. Attaches the virion to host cell receptors including integrin ITGAV/ITGB3. This attachment induces virion internalization predominantly through clathrin-dependent endocytosis. Class II fusion protein that promotes fusion of viral membrane with host endosomal membrane after endocytosis of the virion. This Homo sapiens (Human) protein is Envelope glycoprotein (GP).